We begin with the raw amino-acid sequence, 212 residues long: Thymidylate kinase (212 aa).

An ATP-binding site is contributed by Gly11–Thr18.

Belongs to the thymidylate kinase family.

It catalyses the reaction dTMP + ATP = dTDP + ADP. Phosphorylation of dTMP to form dTDP in both de novo and salvage pathways of dTTP synthesis. This Streptococcus pneumoniae serotype 2 (strain D39 / NCTC 7466) protein is Thymidylate kinase.